The sequence spans 127 residues: Small ribosomal subunit protein eS8 (127 aa).

This sequence belongs to the eukaryotic ribosomal protein eS8 family. In terms of assembly, part of the 30S ribosomal subunit.

In Pyrococcus furiosus (strain ATCC 43587 / DSM 3638 / JCM 8422 / Vc1), this protein is Small ribosomal subunit protein eS8.